Here is a 329-residue protein sequence, read N- to C-terminus: Ig gamma-2 chain C region (329 aa).

Disulfide bonds link cysteine 28–cysteine 79, cysteine 142–cysteine 202, and cysteine 248–cysteine 308. Asparagine 178 carries N-linked (GlcNAc...) asparagine glycosylation.

It is found in the secreted. This chain is Ig gamma-2 chain C region, found in Cavia porcellus (Guinea pig).